We begin with the raw amino-acid sequence, 485 residues long: Delta(14)-sterol reductase ERG24A (485 aa).

A run of 4 helical transmembrane segments spans residues 18–38, 77–97, 131–151, and 155–175; these read FFGPPGAFAISFFLPVLVYVF, GLVSWNGTLAVIGYNVLSLIL, LAVLAAGTIAQGAEFPVWTFM, and FIQILSANIIYSYLVSTFVYV. The N-linked (GlcNAc...) asparagine glycan is linked to Asn240. The next 4 helical transmembrane spans lie at 259-279, 285-305, 319-339, and 431-451; these read ILITAVQALYVFDSWWNEPAI, ITTDGFGMMLAFGDIVWVPYV, SLGPLGLAAMLGLIGLGFYIF, and AQGWGMLITYFYILYFGILLI.

This sequence belongs to the ERG4/ERG24 family.

It localises to the endoplasmic reticulum membrane. The enzyme catalyses 4,4-dimethyl-5alpha-cholesta-8,24-dien-3beta-ol + NADP(+) = 4,4-dimethyl-5alpha-cholesta-8,14,24-trien-3beta-ol + NADPH + H(+). It participates in steroid metabolism; ergosterol biosynthesis. Delta(14)-sterol reductase; part of the third module of ergosterol biosynthesis pathway that includes the late steps of the pathway. Catalyzes the reduction of the C14=C15 double bond within 4,4,24-trimethyl ergosta-8,14,24(28)-trienolto produce 4,4-dimethylfecosterol. The third module or late pathway involves the ergosterol synthesis itself through consecutive reactions that mainly occur in the endoplasmic reticulum (ER) membrane. Firstly, the squalene synthase ERG9 catalyzes the condensation of 2 farnesyl pyrophosphate moieties to form squalene, which is the precursor of all steroids. Squalene synthase is crucial for balancing the incorporation of farnesyl diphosphate (FPP) into sterol and nonsterol isoprene synthesis. Secondly, squalene is converted into lanosterol by the consecutive action of the squalene epoxidase ERG1 and the lanosterol synthase ERG7. Then, the delta(24)-sterol C-methyltransferase ERG6 methylates lanosterol at C-24 to produce eburicol. Eburicol is the substrate of the sterol 14-alpha demethylase encoded by CYP51A, CYP51B and CYP51C, to yield 4,4,24-trimethyl ergosta-8,14,24(28)-trienol. CYP51B encodes the enzyme primarily responsible for sterol 14-alpha-demethylation, and plays an essential role in ascospore formation. CYP51A encodes an additional sterol 14-alpha-demethylase, induced on ergosterol depletion and responsible for the intrinsic variation in azole sensitivity. The third CYP51 isoform, CYP51C, does not encode a sterol 14-alpha-demethylase, but is required for full virulence on host wheat ears. The C-14 reductase ERG24 then reduces the C14=C15 double bond which leads to 4,4-dimethylfecosterol. A sequence of further demethylations at C-4, involving the C-4 demethylation complex containing the C-4 methylsterol oxidases ERG25, the sterol-4-alpha-carboxylate 3-dehydrogenase ERG26 and the 3-keto-steroid reductase ERG27, leads to the production of fecosterol via 4-methylfecosterol. ERG28 has a role as a scaffold to help anchor ERG25, ERG26 and ERG27 to the endoplasmic reticulum. The C-8 sterol isomerase ERG2 then catalyzes the reaction which results in unsaturation at C-7 in the B ring of sterols and thus converts fecosterol to episterol. The sterol-C5-desaturases ERG3A and ERG3BB then catalyze the introduction of a C-5 double bond in the B ring to produce 5-dehydroepisterol. The C-22 sterol desaturases ERG5A and ERG5B further convert 5-dehydroepisterol into ergosta-5,7,22,24(28)-tetraen-3beta-ol by forming the C-22(23) double bond in the sterol side chain. Finally, ergosta-5,7,22,24(28)-tetraen-3beta-ol is substrate of the C-24(28) sterol reductase ERG4 to produce ergosterol. The polypeptide is Delta(14)-sterol reductase ERG24A (Gibberella zeae (strain ATCC MYA-4620 / CBS 123657 / FGSC 9075 / NRRL 31084 / PH-1) (Wheat head blight fungus)).